Here is a 265-residue protein sequence, read N- to C-terminus: Mlc titration factor A (265 aa).

His-111, His-148, His-152, and Glu-211 together coordinate Zn(2+).

This sequence belongs to the MtfA family. In terms of assembly, interacts with Mlc. It depends on Zn(2+) as a cofactor.

It is found in the cytoplasm. Involved in the modulation of the activity of the glucose-phosphotransferase system (glucose-PTS). Interacts with the transcriptional repressor Mlc, preventing its interaction with DNA and leading to the modulation of expression of genes regulated by Mlc, including ptsG, which encodes the PTS system glucose-specific EIICB component. In terms of biological role, shows zinc-dependent metallopeptidase activity. This Escherichia coli O17:K52:H18 (strain UMN026 / ExPEC) protein is Mlc titration factor A.